Here is a 112-residue protein sequence, read N- to C-terminus: UPF0102 protein TTHA0372 (112 aa).

Belongs to the UPF0102 family.

This chain is UPF0102 protein TTHA0372, found in Thermus thermophilus (strain ATCC 27634 / DSM 579 / HB8).